The primary structure comprises 611 residues: Dihydroxy-acid dehydratase (611 aa).

D81 serves as a coordination point for Mg(2+). Position 122 (C122) interacts with [2Fe-2S] cluster. 2 residues coordinate Mg(2+): D123 and K124. Position 124 is an N6-carboxylysine (K124). C195 lines the [2Fe-2S] cluster pocket. E491 lines the Mg(2+) pocket. S517 serves as the catalytic Proton acceptor.

It belongs to the IlvD/Edd family. As to quaternary structure, homodimer. [2Fe-2S] cluster is required as a cofactor. Mg(2+) serves as cofactor.

The catalysed reaction is (2R)-2,3-dihydroxy-3-methylbutanoate = 3-methyl-2-oxobutanoate + H2O. The enzyme catalyses (2R,3R)-2,3-dihydroxy-3-methylpentanoate = (S)-3-methyl-2-oxopentanoate + H2O. It participates in amino-acid biosynthesis; L-isoleucine biosynthesis; L-isoleucine from 2-oxobutanoate: step 3/4. Its pathway is amino-acid biosynthesis; L-valine biosynthesis; L-valine from pyruvate: step 3/4. Functions in the biosynthesis of branched-chain amino acids. Catalyzes the dehydration of (2R,3R)-2,3-dihydroxy-3-methylpentanoate (2,3-dihydroxy-3-methylvalerate) into 2-oxo-3-methylpentanoate (2-oxo-3-methylvalerate) and of (2R)-2,3-dihydroxy-3-methylbutanoate (2,3-dihydroxyisovalerate) into 2-oxo-3-methylbutanoate (2-oxoisovalerate), the penultimate precursor to L-isoleucine and L-valine, respectively. This chain is Dihydroxy-acid dehydratase, found in Agrobacterium fabrum (strain C58 / ATCC 33970) (Agrobacterium tumefaciens (strain C58)).